An 88-amino-acid polypeptide reads, in one-letter code: Cell division topological specificity factor (88 aa).

Belongs to the MinE family.

Prevents the cell division inhibition by proteins MinC and MinD at internal division sites while permitting inhibition at polar sites. This ensures cell division at the proper site by restricting the formation of a division septum at the midpoint of the long axis of the cell. This is Cell division topological specificity factor from Clostridium novyi (strain NT).